Reading from the N-terminus, the 558-residue chain is Atlastin-1 (558 aa).

Positions M1–V29 are disordered. The N-terminal hypervariable region (HVR) stretch occupies residues M1–P34. Over M1–A449 the chain is Cytoplasmic. Phosphoserine occurs at positions 10, 22, and 23. The region spanning D64 to S309 is the GB1/RHD3-type G domain. GDP contacts are provided by R77, K78, G79, K80, S81, F82, Q148, R217, D218, V276, and N279. GTP-binding residues include R77, K78, G79, K80, S81, and F82. S81 provides a ligand contact to Mg(2+). GTP is bound by residues R217, D218, and V276. Residues M347–S438 are 3HB (three-helix bundle) domain. K395 is subject to N6-acetyllysine. Residues E412–K439 are a coiled coil. The tract at residues K439 to T447 is linker. Residues T450–L470 form a helical membrane-spanning segment. Residue D471 is a topological domain, lumenal. A helical membrane pass occupies residues I472 to A492. At Y493 to I558 the chain is on the cytoplasmic side. The interval N521 to I558 is autoinhibitory domain.

Belongs to the TRAFAC class dynamin-like GTPase superfamily. GB1/RHD3 GTPase family. GB1 subfamily. In terms of assembly, monomeric and homodimeric. The homodimer, transiently formed by two molecules on opposing membranes, is the active form mediating ER membrane fusion. Interacts with REEP1, REEP5, RTN3 and RTN4 (via the transmembrane region); these proteins are involved in endoplasmic reticulum tubular network organization. Interacts with ZFYVE27; both proteins are involved in endoplasmic reticulum tubular network organization. Interacts with ARL6IP1; both proteins are involved in endoplasmic reticulum tubular network organization. Interacts with SPAST; the interaction is direct, could recruit SPAST to Golgi membranes. Interacts (via N-terminal region) with MAP4K4 (via CNH regulatory domain). May interact with TMED2. Interacts with CPT1C. In terms of processing, phosphorylated. Phosphorylation, by different kinases, of the N-terminal hypervariable region (HVR) regulates the ATL1-mediated membrane tethering step. Detected in brain where it is abundant in lamina V of the cerebral cortex. Also expressed within the hippocampus, mainly in pyramidal neurons in CA1 and CA3. Weakly expressed in the striatum and more robustly in amygdala and several thalamic nuclei. Also detected in several mesopontine nuclei (at protein level).

It is found in the endoplasmic reticulum membrane. It localises to the golgi apparatus membrane. The protein resides in the cell projection. The protein localises to the axon. It carries out the reaction GTP + H2O = GDP + phosphate + H(+). In terms of biological role, atlastin-1 (ATL1) is a membrane-anchored GTPase that mediates the GTP-dependent fusion of endoplasmic reticulum (ER) membranes, maintaining the continuous ER network. It facilitates the formation of three-way junctions where ER tubules intersect. Two atlastin-1 on neighboring ER tubules bind GTP and form loose homodimers through the GB1/RHD3-type G domains and 3HB regions. Upon GTP hydrolysis, the 3HB regions tighten, pulling the membranes together to drive their fusion. After fusion, the homodimer disassembles upon release of inorganic phosphate (Pi). Subsequently, GDP dissociates, resetting the monomers to a conformation ready for a new fusion cycle. May also regulate more or less directly Golgi biogenesis. Indirectly regulates axonal development. The protein is Atlastin-1 of Rattus norvegicus (Rat).